Reading from the N-terminus, the 493-residue chain is Probable UTP--glucose-1-phosphate uridylyltransferase (493 aa).

Residues 105 to 108 (LTGK), glutamine 181, glycine 211, and aspartate 242 contribute to the UTP site. Residue 107-108 (GK) coordinates substrate. 240–242 (NVD) is a substrate binding site.

Belongs to the UDPGP type 1 family.

It carries out the reaction alpha-D-glucose 1-phosphate + UTP + H(+) = UDP-alpha-D-glucose + diphosphate. Functionally, plays a central role as a glucosyl donor in cellular metabolic pathways. The sequence is that of Probable UTP--glucose-1-phosphate uridylyltransferase from Saccharomyces cerevisiae (strain ATCC 204508 / S288c) (Baker's yeast).